The primary structure comprises 185 residues: Elongation factor P (185 aa).

Belongs to the elongation factor P family.

It localises to the cytoplasm. The protein operates within protein biosynthesis; polypeptide chain elongation. Involved in peptide bond synthesis. Stimulates efficient translation and peptide-bond synthesis on native or reconstituted 70S ribosomes in vitro. Probably functions indirectly by altering the affinity of the ribosome for aminoacyl-tRNA, thus increasing their reactivity as acceptors for peptidyl transferase. This Deinococcus geothermalis (strain DSM 11300 / CIP 105573 / AG-3a) protein is Elongation factor P.